The chain runs to 75 residues: Small ribosomal subunit protein bS16 (75 aa).

Belongs to the bacterial ribosomal protein bS16 family.

The protein is Small ribosomal subunit protein bS16 of Campylobacter fetus subsp. fetus (strain 82-40).